The sequence spans 99 residues: Malonate decarboxylase acyl carrier protein (99 aa).

Residue S25 is modified to O-(phosphoribosyl dephospho-coenzyme A)serine.

This sequence belongs to the MdcC family. In terms of processing, covalently binds the prosthetic group of malonate decarboxylase.

It is found in the cytoplasm. Functionally, subunit of malonate decarboxylase, it is an acyl carrier protein to which acetyl and malonyl thioester residues are bound via a 2'-(5''-phosphoribosyl)-3'-dephospho-CoA prosthetic group and turn over during the catalytic mechanism. This chain is Malonate decarboxylase acyl carrier protein, found in Pseudomonas fluorescens (strain Pf0-1).